Reading from the N-terminus, the 217-residue chain is Protein-L-isoaspartate O-methyltransferase 2 (217 aa).

Serine 62 is an active-site residue.

This sequence belongs to the methyltransferase superfamily. L-isoaspartyl/D-aspartyl protein methyltransferase family.

The protein resides in the cytoplasm. The catalysed reaction is [protein]-L-isoaspartate + S-adenosyl-L-methionine = [protein]-L-isoaspartate alpha-methyl ester + S-adenosyl-L-homocysteine. In terms of biological role, catalyzes the methyl esterification of L-isoaspartyl residues in peptides and proteins that result from spontaneous decomposition of normal L-aspartyl and L-asparaginyl residues. It plays a role in the repair and/or degradation of damaged proteins. The sequence is that of Protein-L-isoaspartate O-methyltransferase 2 from Geotalea uraniireducens (strain Rf4) (Geobacter uraniireducens).